A 408-amino-acid chain; its full sequence is LL-diaminopimelate aminotransferase (408 aa).

Substrate is bound by residues Y15 and G42. Pyridoxal 5'-phosphate-binding positions include Y72, 108–109 (SK), Y132, N187, Y218, and 246–248 (SFS). Substrate is bound by residues K109, Y132, and N187. Position 249 is an N6-(pyridoxal phosphate)lysine (K249). 2 residues coordinate pyridoxal 5'-phosphate: R257 and N292. The substrate site is built by N292 and R388.

This sequence belongs to the class-I pyridoxal-phosphate-dependent aminotransferase family. LL-diaminopimelate aminotransferase subfamily. As to quaternary structure, homodimer. The cofactor is pyridoxal 5'-phosphate.

It catalyses the reaction (2S,6S)-2,6-diaminopimelate + 2-oxoglutarate = (S)-2,3,4,5-tetrahydrodipicolinate + L-glutamate + H2O + H(+). The protein operates within amino-acid biosynthesis; L-lysine biosynthesis via DAP pathway; LL-2,6-diaminopimelate from (S)-tetrahydrodipicolinate (aminotransferase route): step 1/1. In terms of biological role, involved in the synthesis of meso-diaminopimelate (m-DAP or DL-DAP), required for both lysine and peptidoglycan biosynthesis. Catalyzes the direct conversion of tetrahydrodipicolinate to LL-diaminopimelate. The chain is LL-diaminopimelate aminotransferase from Prochlorococcus marinus (strain MIT 9301).